A 508-amino-acid chain; its full sequence is Probable monogalactosyldiacylglycerol synthase 3, chloroplastic (508 aa).

Residues methionine 1 to glycine 60 constitute a chloroplast transit peptide. The disordered stretch occupies residues serine 51–glutamate 79.

Belongs to the glycosyltransferase 28 family.

The protein resides in the plastid. Its subcellular location is the chloroplast membrane. The enzyme catalyses a 1,2-diacyl-sn-glycerol + UDP-alpha-D-galactose = a 1,2-diacyl-3-O-(beta-D-galactosyl)-sn-glycerol + UDP + H(+). In terms of biological role, involved in the synthesis of the major structural component of photosynthetic membranes. The polypeptide is Probable monogalactosyldiacylglycerol synthase 3, chloroplastic (MGD3) (Oryza sativa subsp. japonica (Rice)).